The following is a 187-amino-acid chain: Elongation factor P (187 aa).

It belongs to the elongation factor P family.

It localises to the cytoplasm. The protein operates within protein biosynthesis; polypeptide chain elongation. In terms of biological role, involved in peptide bond synthesis. Stimulates efficient translation and peptide-bond synthesis on native or reconstituted 70S ribosomes in vitro. Probably functions indirectly by altering the affinity of the ribosome for aminoacyl-tRNA, thus increasing their reactivity as acceptors for peptidyl transferase. This chain is Elongation factor P, found in Acidothermus cellulolyticus (strain ATCC 43068 / DSM 8971 / 11B).